Reading from the N-terminus, the 230-residue chain is Fibrillarin-like rRNA/tRNA 2'-O-methyltransferase (230 aa).

S-adenosyl-L-methionine contacts are provided by residues 87-88 (TT), 105-106 (EY), 130-131 (DA), and 150-153 (DVAQ).

Interacts with nop5. Component of box C/D small ribonucleoprotein (sRNP) particles that contain rpl7ae, FlpA and nop5, plus a guide RNA.

Involved in pre-rRNA and tRNA processing. Utilizes the methyl donor S-adenosyl-L-methionine to catalyze the site-specific 2'-hydroxyl methylation of ribose moieties in rRNA and tRNA. Site specificity is provided by a guide RNA that base pairs with the substrate. Methylation occurs at a characteristic distance from the sequence involved in base pairing with the guide RNA. This chain is Fibrillarin-like rRNA/tRNA 2'-O-methyltransferase, found in Methanocaldococcus jannaschii (strain ATCC 43067 / DSM 2661 / JAL-1 / JCM 10045 / NBRC 100440) (Methanococcus jannaschii).